Consider the following 614-residue polypeptide: V-type proton ATPase catalytic subunit A isoform 2 (614 aa).

S142 is subject to Phosphoserine. 247–254 serves as a coordination point for ATP; sequence GAFGCGKT.

The protein belongs to the ATPase alpha/beta chains family. As to quaternary structure, V-ATPase is a heteromultimeric enzyme made up of two complexes: the ATP-hydrolytic V1 complex and the proton translocation V0 complex. The V1 complex consists of three catalytic AB heterodimers that form a heterohexamer, three peripheral stalks each consisting of EG heterodimers, one central rotor including subunits D and F, and the regulatory subunits C and H. The proton translocation complex V0 consists of the proton transport subunit a, a ring of proteolipid subunits c9c'', rotary subunit d, subunits e and f, and the accessory subunits VhaAC45 and ATP6AP2.

It carries out the reaction ATP + H2O + 4 H(+)(in) = ADP + phosphate + 5 H(+)(out). ATP hydrolysis occurs at the interface between the nucleotide-binding domains of subunits A and B. ATP hydrolysis triggers a conformational change in the subunits D and F, which induces a shift of subunit d. The c-ring is subsequently rotated and results in a continuous proton translocation across the membrane. In terms of biological role, catalytic subunit of the V1 complex of vacuolar(H+)-ATPase (V-ATPase), a multisubunit enzyme composed of a peripheral complex (V1) that hydrolyzes ATP and a membrane integral complex (V0) that translocates protons. V-ATPase is responsible for acidifying and maintaining the pH of intracellular compartments and in some cell types, is targeted to the plasma membrane, where it is responsible for acidifying the extracellular environment. The polypeptide is V-type proton ATPase catalytic subunit A isoform 2 (Vha68-2) (Drosophila melanogaster (Fruit fly)).